The chain runs to 348 residues: Holliday junction branch migration complex subunit RuvB (348 aa).

A large ATPase domain (RuvB-L) region spans residues 4-186 (TDRIISANTA…FGIIQRLEFY (183 aa)). ATP-binding positions include I25, R26, G67, K70, T71, T72, 133–135 (EDY), R176, Y186, and R223. T71 serves as a coordination point for Mg(2+). Residues 187–257 (SIDDLSKIVY…IADKALSMLK (71 aa)) are small ATPAse domain (RuvB-S). The head domain (RuvB-H) stretch occupies residues 260–348 (PVGFDHMDHR…SADQQQTLSI (89 aa)). DNA-binding residues include R315 and R320.

It belongs to the RuvB family. As to quaternary structure, homohexamer. Forms an RuvA(8)-RuvB(12)-Holliday junction (HJ) complex. HJ DNA is sandwiched between 2 RuvA tetramers; dsDNA enters through RuvA and exits via RuvB. An RuvB hexamer assembles on each DNA strand where it exits the tetramer. Each RuvB hexamer is contacted by two RuvA subunits (via domain III) on 2 adjacent RuvB subunits; this complex drives branch migration. In the full resolvosome a probable DNA-RuvA(4)-RuvB(12)-RuvC(2) complex forms which resolves the HJ.

It is found in the cytoplasm. It carries out the reaction ATP + H2O = ADP + phosphate + H(+). The RuvA-RuvB-RuvC complex processes Holliday junction (HJ) DNA during genetic recombination and DNA repair, while the RuvA-RuvB complex plays an important role in the rescue of blocked DNA replication forks via replication fork reversal (RFR). RuvA specifically binds to HJ cruciform DNA, conferring on it an open structure. The RuvB hexamer acts as an ATP-dependent pump, pulling dsDNA into and through the RuvAB complex. RuvB forms 2 homohexamers on either side of HJ DNA bound by 1 or 2 RuvA tetramers; 4 subunits per hexamer contact DNA at a time. Coordinated motions by a converter formed by DNA-disengaged RuvB subunits stimulates ATP hydrolysis and nucleotide exchange. Immobilization of the converter enables RuvB to convert the ATP-contained energy into a lever motion, pulling 2 nucleotides of DNA out of the RuvA tetramer per ATP hydrolyzed, thus driving DNA branch migration. The RuvB motors rotate together with the DNA substrate, which together with the progressing nucleotide cycle form the mechanistic basis for DNA recombination by continuous HJ branch migration. Branch migration allows RuvC to scan DNA until it finds its consensus sequence, where it cleaves and resolves cruciform DNA. The chain is Holliday junction branch migration complex subunit RuvB from Francisella tularensis subsp. tularensis (strain FSC 198).